Reading from the N-terminus, the 738-residue chain is MCIGPAPTPETEEELPPSPQHVLTEKDHQRLRFQRNIGVSAHIDSGKTTLTERILYYTGRISQIHEVRGRDAVGAKMDSMDLEREKGITIQSAATFCDWETTDVATGNKQNYAINIIDTPGHVDFTIEVERALRVLDGAILVLCAVAGVQSQTTTVDRQMRRYGVPRISFINKMDRPGANPWRIVNQIRSKLRIPAAAVQVPIGIEDEFKGVVDLVHWRSIYNEGQKGNEVVISQEIPESVMELAKAKRNELVEQLAEVDEEIGELFLNDELPNNDQIAAAIRRSTIALKFSPVFLGSAIKNTAVQPMLDGVCAYLPNPAESEVLAHDTSLPSSAPQVQLTPAADAPLVGLAFKLEEGRFGQLTYMRVYQGTLKKGNQIYNARTGKKVKVPRLVRMHSNEMEDIESIGPGEICAIFGVECSSGDTFTDGSTSFSMTNMYVPEPVISLSIKPKGIETPNFSRALNRFQKEDPTFKVHIDHESKETIISGMGELHLEIYVERMRREYNTDCVTGKPRVAFRETITQRADFAYTHKKQTGGAGQYAKVVGYIEPMEPDPETGKDVAFESVVMGGNIPTNFIPAIEKGFYEALEKGALSGNAIFGCRFVLKDGAFHAVDSSELAFRLATIGAFREAFKMAKGVILEPIMNVEVVAPVEFQSQVIGGLNTRRGTIVDSEVRDDEFTAAAEVALNDMFGYSNQLRGSTQGKGEFSMEYKHHMPVLPNLQKDLEEAYRRTLVVKK.

The tract at residues 1-20 is disordered; that stretch reads MCIGPAPTPETEEELPPSPQ. The 289-residue stretch at 32 to 320 folds into the tr-type G domain; the sequence is RFQRNIGVSA…GVCAYLPNPA (289 aa). Residues 41–48, 118–122, and 172–175 contribute to the GTP site; these read AHIDSGKT, DTPGH, and NKMD.

It belongs to the TRAFAC class translation factor GTPase superfamily. Classic translation factor GTPase family. EF-G/EF-2 subfamily.

The protein resides in the mitochondrion. Its pathway is protein biosynthesis; polypeptide chain elongation. Mitochondrial GTPase that catalyzes the GTP-dependent ribosomal translocation step during translation elongation. During this step, the ribosome changes from the pre-translocational (PRE) to the post-translocational (POST) state as the newly formed A-site-bound peptidyl-tRNA and P-site-bound deacylated tRNA move to the P and E sites, respectively. Catalyzes the coordinated movement of the two tRNA molecules, the mRNA and conformational changes in the ribosome. The polypeptide is Elongation factor G, mitochondrial (Laccaria bicolor (strain S238N-H82 / ATCC MYA-4686) (Bicoloured deceiver)).